We begin with the raw amino-acid sequence, 369 residues long: Deoxyhypusine synthase (369 aa).

S78 is modified (phosphoserine). NAD(+) contacts are provided by residues S105–S109, T131–G133, E137, and D238. E136–E137 is a binding site for spermidine. D243 contacts spermidine. G283 provides a ligand contact to NAD(+). H288 is a spermidine binding site. T308 to A309 contributes to the NAD(+) binding site. Residues G314–D316 and E323–K329 contribute to the spermidine site. K329 acts as the Nucleophile in catalysis. D342–A343 is an NAD(+) binding site.

This sequence belongs to the deoxyhypusine synthase family. Homotetramer formed by a dimer of dimers. The cofactor is NAD(+).

It carries out the reaction [eIF5A protein]-L-lysine + spermidine = [eIF5A protein]-deoxyhypusine + propane-1,3-diamine. It functions in the pathway protein modification; eIF5A hypusination. Its function is as follows. Catalyzes the NAD-dependent oxidative cleavage of spermidine and the subsequent transfer of the butylamine moiety of spermidine to the epsilon-amino group of a critical lysine residue of the eIF-5A precursor protein to form the intermediate deoxyhypusine residue. This is the first step of the post-translational modification of that lysine into an unusual amino acid residue named hypusine. Hypusination is unique to mature eIF-5A factor and is essential for its function. This is Deoxyhypusine synthase (DHPS) from Homo sapiens (Human).